The following is a 233-amino-acid chain: NAD-dependent protein deacylase (233 aa).

Positions methionine 1–aspartate 230 constitute a Deacetylase sirtuin-type domain. An NAD(+)-binding site is contributed by glycine 9–tryptophan 28. The substrate site is built by tyrosine 53 and arginine 56. Residue glutamine 88–aspartate 91 participates in NAD(+) binding. Residue histidine 106 is the Proton acceptor of the active site. 4 residues coordinate Zn(2+): cysteine 114, cysteine 117, cysteine 133, and cysteine 136. NAD(+) is bound by residues glycine 172 to serine 174 and isoleucine 213.

Belongs to the sirtuin family. Class III subfamily. Zn(2+) is required as a cofactor.

Its subcellular location is the cytoplasm. It carries out the reaction N(6)-acetyl-L-lysyl-[protein] + NAD(+) + H2O = 2''-O-acetyl-ADP-D-ribose + nicotinamide + L-lysyl-[protein]. The catalysed reaction is N(6)-succinyl-L-lysyl-[protein] + NAD(+) + H2O = 2''-O-succinyl-ADP-D-ribose + nicotinamide + L-lysyl-[protein]. Its function is as follows. NAD-dependent lysine deacetylase and desuccinylase that specifically removes acetyl and succinyl groups on target proteins. Modulates the activities of several proteins which are inactive in their acylated form. The polypeptide is NAD-dependent protein deacylase (Campylobacter jejuni (strain RM1221)).